Here is a 185-residue protein sequence, read N- to C-terminus: Large ribosomal subunit protein uL22 (185 aa).

The disordered stretch occupies residues valine 157–aspartate 185. Positions lysine 169–arginine 178 are enriched in basic residues.

It belongs to the universal ribosomal protein uL22 family.

The polypeptide is Large ribosomal subunit protein uL22 (RpL17) (Argas monolakensis (Mono lake bird tick)).